The primary structure comprises 400 residues: Phosphoglycerate kinase (400 aa).

Substrate contacts are provided by residues 22–24 (DFN), Arg-38, 61–64 (HLGR), Arg-119, and Arg-152. ATP-binding positions include Lys-205, Gly-296, Glu-327, and 353-356 (GGDT).

Belongs to the phosphoglycerate kinase family. Monomer.

It is found in the cytoplasm. The enzyme catalyses (2R)-3-phosphoglycerate + ATP = (2R)-3-phospho-glyceroyl phosphate + ADP. Its pathway is carbohydrate degradation; glycolysis; pyruvate from D-glyceraldehyde 3-phosphate: step 2/5. The chain is Phosphoglycerate kinase from Campylobacter jejuni subsp. jejuni serotype O:6 (strain 81116 / NCTC 11828).